A 58-amino-acid chain; its full sequence is UPF0337 protein OB2685 (58 aa).

2 stretches are compositionally biased toward basic and acidic residues: residues 1-22 (MSDG…EAKD) and 30-46 (DPQR…KGEA). The interval 1–58 (MSDGMKDKAKAIGKKIKGEAKDQWGSATDDPQRKAEGKRDKAKGEAQDTIADAKNNNK) is disordered.

This sequence belongs to the UPF0337 (CsbD) family.

This chain is UPF0337 protein OB2685, found in Oceanobacillus iheyensis (strain DSM 14371 / CIP 107618 / JCM 11309 / KCTC 3954 / HTE831).